The primary structure comprises 179 residues: ATP synthase subunit delta (179 aa).

This sequence belongs to the ATPase delta chain family. F-type ATPases have 2 components, F(1) - the catalytic core - and F(0) - the membrane proton channel. F(1) has five subunits: alpha(3), beta(3), gamma(1), delta(1), epsilon(1). F(0) has three main subunits: a(1), b(2) and c(10-14). The alpha and beta chains form an alternating ring which encloses part of the gamma chain. F(1) is attached to F(0) by a central stalk formed by the gamma and epsilon chains, while a peripheral stalk is formed by the delta and b chains.

The protein localises to the cell inner membrane. In terms of biological role, f(1)F(0) ATP synthase produces ATP from ADP in the presence of a proton or sodium gradient. F-type ATPases consist of two structural domains, F(1) containing the extramembraneous catalytic core and F(0) containing the membrane proton channel, linked together by a central stalk and a peripheral stalk. During catalysis, ATP synthesis in the catalytic domain of F(1) is coupled via a rotary mechanism of the central stalk subunits to proton translocation. Functionally, this protein is part of the stalk that links CF(0) to CF(1). It either transmits conformational changes from CF(0) to CF(1) or is implicated in proton conduction. This chain is ATP synthase subunit delta, found in Koribacter versatilis (strain Ellin345).